We begin with the raw amino-acid sequence, 120 residues long: Small ribosomal subunit protein uS17 (120 aa).

Residues 1–22 (MMAEAKTGAKATKSAAAGAADG) show a composition bias toward low complexity. Residues 1–46 (MMAEAKTGAKATKSAAAGAADGASKEKGPKHTPSPPKPSGRRKTRI) form a disordered region.

This sequence belongs to the universal ribosomal protein uS17 family. Part of the 30S ribosomal subunit.

In terms of biological role, one of the primary rRNA binding proteins, it binds specifically to the 5'-end of 16S ribosomal RNA. The chain is Small ribosomal subunit protein uS17 from Mycobacterium ulcerans (strain Agy99).